The primary structure comprises 238 residues: Formate dehydrogenase, cytochrome b556 subunit (238 aa).

Heme b-binding residues include His-23 and His-62. 4 consecutive transmembrane segments (helical) span residues 23–43 (HWML…FFFP), 60–80 (AIHP…ALLY), 120–140 (MLFW…IIMW), and 155–175 (IAIL…LVHI). Heme b is bound by residues His-160 and His-174.

The protein belongs to the formate dehydrogenase gamma subunit family. In terms of assembly, formate dehydrogenase is a membrane-bound complex, formed by subunits alpha, beta and gamma. The cofactor is heme.

It localises to the cell membrane. Allows to use formate as major electron donor during anaerobic respiration. Subunit gamma is probably the cytochrome b556(FDO) component of the formate dehydrogenase. This chain is Formate dehydrogenase, cytochrome b556 subunit (fdxI), found in Haemophilus influenzae (strain ATCC 51907 / DSM 11121 / KW20 / Rd).